We begin with the raw amino-acid sequence, 343 residues long: Flap endonuclease 1 (343 aa).

An N-domain region spans residues 1 to 98; sequence MGVPIGDLVP…KELEKRREAR (98 aa). Residues Asp-27, Asp-80, Glu-152, Glu-154, Asp-173, Asp-175, and Asp-236 each contribute to the Mg(2+) site. The segment at 116 to 258 is I-domain; sequence EARKYAQRAT…KALEIVRYSR (143 aa). The interaction with PCNA stretch occupies residues 330–338; that stretch reads RQSTLESWF.

This sequence belongs to the XPG/RAD2 endonuclease family. FEN1 subfamily. In terms of assembly, interacts with PCNA. PCNA stimulates the nuclease activity without altering cleavage specificity. The cofactor is Mg(2+).

In terms of biological role, structure-specific nuclease with 5'-flap endonuclease and 5'-3' exonuclease activities involved in DNA replication and repair. During DNA replication, cleaves the 5'-overhanging flap structure that is generated by displacement synthesis when DNA polymerase encounters the 5'-end of a downstream Okazaki fragment. Binds the unpaired 3'-DNA end and kinks the DNA to facilitate 5' cleavage specificity. Cleaves one nucleotide into the double-stranded DNA from the junction in flap DNA, leaving a nick for ligation. Also involved in the base excision repair (BER) pathway. Acts as a genome stabilization factor that prevents flaps from equilibrating into structures that lead to duplications and deletions. Also possesses 5'-3' exonuclease activity on nicked or gapped double-stranded DNA. The chain is Flap endonuclease 1 from Pyrococcus horikoshii (strain ATCC 700860 / DSM 12428 / JCM 9974 / NBRC 100139 / OT-3).